The primary structure comprises 196 residues: uncharacterized protein (196 aa).

Residues 26 to 46 form a helical membrane-spanning segment; that stretch reads ITFFFILLICFICILLLLAIF.

It localises to the membrane. This is an uncharacterized protein from Mus musculus (Mouse).